The chain runs to 436 residues: GTPase Der (436 aa).

2 EngA-type G domains span residues 4-167 (PVIA…PKIE) and 176-351 (IRFS…ESHS). Residues 10 to 17 (GRPNVGKS), 57 to 61 (DTGGI), 119 to 122 (NKVD), 182 to 189 (GRPNVGKS), 229 to 233 (DTAGM), and 294 to 297 (NKWD) each bind GTP. The 85-residue stretch at 352–436 (IRIQTNVLND…PIHIIARARD (85 aa)) folds into the KH-like domain.

The protein belongs to the TRAFAC class TrmE-Era-EngA-EngB-Septin-like GTPase superfamily. EngA (Der) GTPase family. Associates with the 50S ribosomal subunit.

Its function is as follows. GTPase that plays an essential role in the late steps of ribosome biogenesis. The sequence is that of GTPase Der from Bacillus anthracis (strain A0248).